A 618-amino-acid chain; its full sequence is 1-deoxy-D-xylulose-5-phosphate synthase (618 aa).

Thiamine diphosphate-binding positions include His-70 and Gly-111–Ser-113. Asp-142 serves as a coordination point for Mg(2+). Residues Gly-143–Ser-144, Asn-171, Tyr-278, and Glu-360 contribute to the thiamine diphosphate site. Asn-171 serves as a coordination point for Mg(2+).

This sequence belongs to the transketolase family. DXPS subfamily. In terms of assembly, homodimer. Mg(2+) serves as cofactor. Thiamine diphosphate is required as a cofactor.

The catalysed reaction is D-glyceraldehyde 3-phosphate + pyruvate + H(+) = 1-deoxy-D-xylulose 5-phosphate + CO2. It functions in the pathway metabolic intermediate biosynthesis; 1-deoxy-D-xylulose 5-phosphate biosynthesis; 1-deoxy-D-xylulose 5-phosphate from D-glyceraldehyde 3-phosphate and pyruvate: step 1/1. Catalyzes the acyloin condensation reaction between C atoms 2 and 3 of pyruvate and glyceraldehyde 3-phosphate to yield 1-deoxy-D-xylulose-5-phosphate (DXP). The chain is 1-deoxy-D-xylulose-5-phosphate synthase from Helicobacter pylori (strain HPAG1).